A 291-amino-acid chain; its full sequence is Protein SpdB (291 aa).

3 consecutive transmembrane segments (helical) span residues V24–G44, I71–L91, and W99–W119.

Its subcellular location is the cell membrane. In terms of biological role, involved in plasmid transfer. The sequence is that of Protein SpdB (spdB) from Streptomyces lividans.